Here is a 209-residue protein sequence, read N- to C-terminus: dTTP/UTP pyrophosphatase (209 aa).

Residue aspartate 88 is the Proton acceptor of the active site.

This sequence belongs to the Maf family. YhdE subfamily. A divalent metal cation serves as cofactor.

Its subcellular location is the cytoplasm. The catalysed reaction is dTTP + H2O = dTMP + diphosphate + H(+). The enzyme catalyses UTP + H2O = UMP + diphosphate + H(+). Functionally, nucleoside triphosphate pyrophosphatase that hydrolyzes dTTP and UTP. May have a dual role in cell division arrest and in preventing the incorporation of modified nucleotides into cellular nucleic acids. The chain is dTTP/UTP pyrophosphatase from Burkholderia mallei (strain ATCC 23344).